Reading from the N-terminus, the 331-residue chain is Protein MGF 300-4L (331 aa).

It belongs to the asfivirus MGF 300 family.

The chain is Protein MGF 300-4L from African swine fever virus (isolate Tick/Malawi/Lil 20-1/1983) (ASFV).